A 346-amino-acid chain; its full sequence is Aldose 1-epimerase (346 aa).

Arg-79 serves as a coordination point for substrate. The active-site Proton donor is His-175. Residue Asp-245 coordinates substrate. The active-site Proton acceptor is Glu-309.

This sequence belongs to the aldose epimerase family.

It localises to the cytoplasm. It catalyses the reaction alpha-D-glucose = beta-D-glucose. It functions in the pathway carbohydrate metabolism; hexose metabolism. Mutarotase converts alpha-aldose to the beta-anomer. It is active on D-glucose, L-arabinose, D-xylose, D-galactose, maltose and lactose. The sequence is that of Aldose 1-epimerase (galM) from Escherichia coli (strain K12).